The sequence spans 93 residues: Small ribosomal subunit protein uS19 (93 aa).

The protein belongs to the universal ribosomal protein uS19 family.

In terms of biological role, protein S19 forms a complex with S13 that binds strongly to the 16S ribosomal RNA. The chain is Small ribosomal subunit protein uS19 from Ehrlichia chaffeensis (strain ATCC CRL-10679 / Arkansas).